A 194-amino-acid chain; its full sequence is Imidazoleglycerol-phosphate dehydratase (194 aa).

Belongs to the imidazoleglycerol-phosphate dehydratase family.

Its subcellular location is the cytoplasm. It catalyses the reaction D-erythro-1-(imidazol-4-yl)glycerol 3-phosphate = 3-(imidazol-4-yl)-2-oxopropyl phosphate + H2O. Its pathway is amino-acid biosynthesis; L-histidine biosynthesis; L-histidine from 5-phospho-alpha-D-ribose 1-diphosphate: step 6/9. This Methanothermobacter thermautotrophicus (strain ATCC 29096 / DSM 1053 / JCM 10044 / NBRC 100330 / Delta H) (Methanobacterium thermoautotrophicum) protein is Imidazoleglycerol-phosphate dehydratase.